Consider the following 177-residue polypeptide: Large ribosomal subunit protein uL10 (177 aa).

Belongs to the universal ribosomal protein uL10 family. In terms of assembly, part of the ribosomal stalk of the 50S ribosomal subunit. The N-terminus interacts with L11 and the large rRNA to form the base of the stalk. The C-terminus forms an elongated spine to which L12 dimers bind in a sequential fashion forming a multimeric L10(L12)X complex.

In terms of biological role, forms part of the ribosomal stalk, playing a central role in the interaction of the ribosome with GTP-bound translation factors. The sequence is that of Large ribosomal subunit protein uL10 from Leptospira borgpetersenii serovar Hardjo-bovis (strain JB197).